The sequence spans 578 residues: 2-succinyl-5-enolpyruvyl-6-hydroxy-3-cyclohexene-1-carboxylate synthase (578 aa).

This sequence belongs to the TPP enzyme family. MenD subfamily. As to quaternary structure, homodimer. The cofactor is Mg(2+). Mn(2+) is required as a cofactor. Requires thiamine diphosphate as cofactor.

The catalysed reaction is isochorismate + 2-oxoglutarate + H(+) = 5-enolpyruvoyl-6-hydroxy-2-succinyl-cyclohex-3-ene-1-carboxylate + CO2. It participates in quinol/quinone metabolism; 1,4-dihydroxy-2-naphthoate biosynthesis; 1,4-dihydroxy-2-naphthoate from chorismate: step 2/7. The protein operates within quinol/quinone metabolism; menaquinone biosynthesis. In terms of biological role, catalyzes the thiamine diphosphate-dependent decarboxylation of 2-oxoglutarate and the subsequent addition of the resulting succinic semialdehyde-thiamine pyrophosphate anion to isochorismate to yield 2-succinyl-5-enolpyruvyl-6-hydroxy-3-cyclohexene-1-carboxylate (SEPHCHC). The sequence is that of 2-succinyl-5-enolpyruvyl-6-hydroxy-3-cyclohexene-1-carboxylate synthase from Bacillus velezensis (strain DSM 23117 / BGSC 10A6 / LMG 26770 / FZB42) (Bacillus amyloliquefaciens subsp. plantarum).